The following is a 261-amino-acid chain: Carbonic anhydrase 1 (261 aa).

Ala-2 bears the N-acetylalanine mark. One can recognise an Alpha-carbonic anhydrase domain in the interval 4–261; the sequence is ADWGYGSENG…LKGRTVRASF (258 aa). The Proton donor/acceptor role is filled by His-65. His-95, His-97, and His-120 together coordinate Zn(2+). Residues Thr-200 and 200 to 201 each bind substrate; that span reads TH. The tract at residues 239–261 is disordered; it reads AVPVLSNHRPPQPLKGRTVRASF.

This sequence belongs to the alpha-carbonic anhydrase family. The cofactor is Zn(2+).

The protein localises to the cytoplasm. It carries out the reaction hydrogencarbonate + H(+) = CO2 + H2O. It catalyses the reaction urea = cyanamide + H2O. Its activity is regulated as follows. Inhibited by acetazolamide. Its function is as follows. Catalyzes the reversible hydration of carbon dioxide. Can hydrate cyanamide to urea. This chain is Carbonic anhydrase 1 (Ca1), found in Mus musculus (Mouse).